Consider the following 330-residue polypeptide: Dipeptide transport ATP-binding protein DppD (330 aa).

An ABC transporter domain is found at 6–254 (VKELSVHFGD…PKHPYTQALL (249 aa)). 40-47 (GESGSGKS) is an ATP binding site.

The protein belongs to the ABC transporter superfamily.

Its subcellular location is the cell inner membrane. It catalyses the reaction a dipeptide(out) + ATP + H2O = a dipeptide(in) + ADP + phosphate + H(+). Functionally, part of the ABC transporter DppBCDF involved in dipeptide transport. Responsible for energy coupling to the transport system. The chain is Dipeptide transport ATP-binding protein DppD (dppD) from Haemophilus influenzae (strain ATCC 51907 / DSM 11121 / KW20 / Rd).